An 85-amino-acid chain; its full sequence is Toxin TdNa8 (85 aa).

Residues 1 to 19 form the signal peptide; it reads MNYLTLIAAASLLTAGTES. An LCN-type CS-alpha/beta domain is found at 21-81; the sequence is KDGYPVKEGD…AAIKGYGRCR (61 aa). 4 disulfides stabilise this stretch: C31-C80, C35-C56, C42-C63, and C46-C65. The residue at position 82 (P82) is a Proline amide.

Belongs to the long (4 C-C) scorpion toxin superfamily. Sodium channel inhibitor family. Alpha subfamily. Expressed by the venom gland.

The protein resides in the secreted. Its function is as follows. Alpha toxins bind voltage-independently at site-3 of sodium channels (Nav) and inhibit the inactivation of the activated channels, thereby blocking neuronal transmission. The polypeptide is Toxin TdNa8 (Tityus discrepans (Venezuelan scorpion)).